A 354-amino-acid polypeptide reads, in one-letter code: UPF0283 membrane protein Meso_1416 (354 aa).

Residues 1-28 (MSEPRRPAAFRIEPAPSPSPEATREDVR) form a disordered region. 2 helical membrane-spanning segments follow: residues 71-91 (LGAV…GLWA) and 105-125 (LGWL…AIVV).

This sequence belongs to the UPF0283 family.

The protein localises to the cell inner membrane. This chain is UPF0283 membrane protein Meso_1416, found in Chelativorans sp. (strain BNC1).